A 140-amino-acid chain; its full sequence is Translation initiation factor 2 subunit beta (140 aa).

The protein belongs to the eIF-2-beta/eIF-5 family. Heterotrimer composed of an alpha, a beta and a gamma chain.

In terms of biological role, eIF-2 functions in the early steps of protein synthesis by forming a ternary complex with GTP and initiator tRNA. This chain is Translation initiation factor 2 subunit beta (eif2b), found in Pyrococcus horikoshii (strain ATCC 700860 / DSM 12428 / JCM 9974 / NBRC 100139 / OT-3).